The chain runs to 195 residues: dTTP/UTP pyrophosphatase (195 aa).

Asp77 acts as the Proton acceptor in catalysis.

The protein belongs to the Maf family. YhdE subfamily. Requires a divalent metal cation as cofactor.

Its subcellular location is the cytoplasm. The enzyme catalyses dTTP + H2O = dTMP + diphosphate + H(+). It catalyses the reaction UTP + H2O = UMP + diphosphate + H(+). Functionally, nucleoside triphosphate pyrophosphatase that hydrolyzes dTTP and UTP. May have a dual role in cell division arrest and in preventing the incorporation of modified nucleotides into cellular nucleic acids. The polypeptide is dTTP/UTP pyrophosphatase (Flavobacterium psychrophilum (strain ATCC 49511 / DSM 21280 / CIP 103535 / JIP02/86)).